The chain runs to 43 residues: Hemolysin H1U (43 aa).

Residue M1 is modified to N-formylmethionine.

This sequence belongs to the staphylococcal hemolytic protein family.

The protein resides in the secreted. Virulence factor. Causes hemolysis of erythrocytes. Acts synergistically with beta-hemolysins from S.aureus ATCC 25923. Cytotoxic towards human dermal fibroblasts. In Staphylococcus ureilyticus (Staphylococcus cohnii subsp. urealyticus), this protein is Hemolysin H1U.